The chain runs to 518 residues: UPF0288 protein Mbar_A0706 (518 aa).

It belongs to the UPF0288 family.

The protein is UPF0288 protein Mbar_A0706 of Methanosarcina barkeri (strain Fusaro / DSM 804).